A 170-amino-acid chain; its full sequence is MVDTTKNTKLFTSYGVSTSKTVAPEMAAKLISKAKRPLLMVGTLALDPEILDRVVKISKTANIPIAATGSSLAALADKDVDAKYINAHMLGFYLTDPNWPGLDGNGNYDMVISIGFKKFYINQVLSAAKNFSNVKAIAIERGYIQNATMSFGNLSKAEHYAALDELVDFL.

Belongs to the CdhB family. In terms of assembly, heterotetramer of two alpha and two epsilon subunits. The ACDS complex is made up of alpha, epsilon, beta, gamma and delta subunits with a probable stoichiometry of (alpha(2)epsilon(2))(4)-beta(8)-(gamma(1)delta(1))(8).

It functions in the pathway one-carbon metabolism; methanogenesis from acetate. Functionally, part of a complex that catalyzes the reversible cleavage of acetyl-CoA, allowing growth on acetate as sole source of carbon and energy. The alpha-epsilon subcomponent functions as a carbon monoxide dehydrogenase. The precise role of the epsilon subunit is unclear; it may have a stabilizing role within the alpha(2)epsilon(2) component and/or be involved in electron transfer to FAD during a potential FAD-mediated CO oxidation. The polypeptide is Acetyl-CoA decarbonylase/synthase complex subunit epsilon 2 (cdhB2) (Methanosarcina mazei (strain ATCC BAA-159 / DSM 3647 / Goe1 / Go1 / JCM 11833 / OCM 88) (Methanosarcina frisia)).